Consider the following 1578-residue polypeptide: Neurexin-3 (1578 aa).

The signal sequence occupies residues 1–27 (MSFTLHSVFFTLKVSSFLGSLVGLCLG). The 175-residue stretch at 28 to 202 (LEFMGLPNQW…SVQLEAEGPC (175 aa)) folds into the Laminin G-like 1 domain. Residues 28–1503 (LEFMGLPNQW…EVIRESNSTT (1476 aa)) are Extracellular-facing. 2 N-linked (GlcNAc...) asparagine glycosylation sites follow: Asn58 and Asn105. The region spanning 198–235 (AEGPCGERPCENGGICFLLDGHPTCDCSTTGYGGTLCS) is the EGF-like 1 domain. Intrachain disulfides connect Cys202/Cys213, Cys207/Cys222, and Cys224/Cys234. Laminin G-like domains follow at residues 260 to 444 (ENVA…VFKC) and 451 to 643 (DPIN…KSSC). Ca(2+)-binding residues include Asp308, Leu325, and Met378. Intrachain disulfides connect Cys408-Cys444, Cys614-Cys643, Cys651-Cys662, Cys656-Cys671, and Cys673-Cys683. Positions 647-684 (SAKQCDSYPCKNNAVCKDGWNRFICDCTGTGYWGRTCE) constitute an EGF-like 2 domain. Laminin G-like domains follow at residues 689–861 (ILSY…IDYC) and 875–1050 (DPVT…DRGC). Ca(2+) is bound by residues Asp736 and Leu753. Residue Asn761 is glycosylated (N-linked (GlcNAc...) asparagine). Arg811 contacts Ca(2+). Cystine bridges form between Cys1022–Cys1050, Cys1057–Cys1068, Cys1062–Cys1077, and Cys1079–Cys1089. The EGF-like 3 domain maps to 1053 to 1090 (PSTTCQEDSCANQGVCMQQWEGFTCDCSMTSYSGNQCN). In terms of domain architecture, Laminin G-like 6 spans 1094-1294 (ATYIFGKSGG…NPNIKINGSV (201 aa)). Ca(2+) contacts are provided by Asp1146 and Ile1163. Asn1193 carries an N-linked (GlcNAc...) asparagine glycan. Residues Ile1245 and Asn1247 each coordinate Ca(2+). N-linked (GlcNAc...) asparagine glycans are attached at residues Asn1291 and Asn1335. Residues 1328 to 1352 (ATTTTRKNRSTASIQPTSDDLVSSA) form a disordered region. The segment covering 1337-1352 (STASIQPTSDDLVSSA) has biased composition (polar residues). A glycan (O-linked (Xyl...) (heparan sulfate) serine) is linked at Ser1351. N-linked (GlcNAc...) asparagine glycosylation is present at Asn1500. The helical transmembrane segment at 1504 to 1524 (GMVVGIVAAAALCILILLYAM) threads the bilayer. The Cytoplasmic portion of the chain corresponds to 1525–1578 (YKYRNRDEGSYQVDETRNYISNSAQSNGTLMKEKQASSKSGHKKQKNKDKEYYV). Positions 1546–1578 (NSAQSNGTLMKEKQASSKSGHKKQKNKDKEYYV) are disordered.

Belongs to the neurexin family. In terms of assembly, the laminin G-like domain 2 binds to NXPH1. Isoform 8/alpha-4B binds to alpha-dystroglycan. The cytoplasmic C-terminal region binds to CASK. Specific isoforms bind neuroligins NLGN1, NLGN2 and NLGN3. Interacts with CLSTN3. Post-translationally, O-glycosylated; contains heparan sulfate. Heparan sulfate attachment is required for synapse development by mediating interactions with neuroligins. Brain.

Its subcellular location is the presynaptic cell membrane. Neuronal cell surface protein that may be involved in cell recognition and cell adhesion. May mediate intracellular signaling. The protein is Neurexin-3 (Nrxn3) of Rattus norvegicus (Rat).